The sequence spans 668 residues: Kelch repeat-containing protein ARB_01230 (668 aa).

The first 32 residues, 1-32, serve as a signal peptide directing secretion; that stretch reads MEVGRFASKSASMTYLLLVLLVGFILPQQGQH. Over 33-522 the chain is Extracellular; that stretch reads AHARTLARRD…GSGSDGPNIA (490 aa). The N-linked (GlcNAc...) asparagine glycan is linked to asparagine 60. Kelch repeat units follow at residues 62-108 and 125-176; these read TLYI…PRGD and SLFL…ANIP. 2 N-linked (GlcNAc...) asparagine glycosylation sites follow: asparagine 251 and asparagine 291. 4 Kelch repeats span residues 283–331, 340–395, 396–445, and 463–509; these read ILGL…AVAA, QVYL…IWNS, QIVV…ASQT, and VQSV…GPHA. Residues 523–543 traverse the membrane as a helical segment; it reads AIVAGVIAGCLGVLAIYLGFV. At 544–668 the chain is on the cytoplasmic side; that stretch reads TWLYRRRLAI…PRQTLRVINQ (125 aa). The disordered stretch occupies residues 611-642; sequence DNQRHNHTRSSSGGNFDHLAQPERPSTSSSVE.

It localises to the membrane. The protein resides in the secreted. The protein is Kelch repeat-containing protein ARB_01230 of Arthroderma benhamiae (strain ATCC MYA-4681 / CBS 112371) (Trichophyton mentagrophytes).